Here is a 401-residue protein sequence, read N- to C-terminus: Large ribosomal subunit protein uL3 (401 aa).

The interval 1-22 is disordered; that stretch reads MSHRKFSAPRHGHMGFTPKKRS.

It belongs to the universal ribosomal protein uL3 family.

It is found in the cytoplasm. In terms of biological role, the L3 protein is a component of the large subunit of cytoplasmic ribosomes. The sequence is that of Large ribosomal subunit protein uL3 (rpl-3) from Caenorhabditis elegans.